A 315-amino-acid polypeptide reads, in one-letter code: Phosphatidylglycerol--prolipoprotein diacylglyceryl transferase (315 aa).

The next 2 membrane-spanning stretches (helical) occupy residues 19 to 39 (FTIHMYAICILIGICVAVWIL) and 93 to 113 (VWEGGMAIFGGISVGTLVAFL). R141 contacts a 1,2-diacyl-sn-glycero-3-phospho-(1'-sn-glycerol). A run of 2 helical transmembrane segments spans residues 188 to 208 (LFHPTFLYEMIWNLIGAALII) and 256 to 276 (MWTAIIVFVLGCILFVVLYQY).

This sequence belongs to the Lgt family.

The protein localises to the cell membrane. It catalyses the reaction L-cysteinyl-[prolipoprotein] + a 1,2-diacyl-sn-glycero-3-phospho-(1'-sn-glycerol) = an S-1,2-diacyl-sn-glyceryl-L-cysteinyl-[prolipoprotein] + sn-glycerol 1-phosphate + H(+). It functions in the pathway protein modification; lipoprotein biosynthesis (diacylglyceryl transfer). In terms of biological role, catalyzes the transfer of the diacylglyceryl group from phosphatidylglycerol to the sulfhydryl group of the N-terminal cysteine of a prolipoprotein, the first step in the formation of mature lipoproteins. The chain is Phosphatidylglycerol--prolipoprotein diacylglyceryl transferase from Bifidobacterium longum subsp. infantis (strain ATCC 15697 / DSM 20088 / JCM 1222 / NCTC 11817 / S12).